Reading from the N-terminus, the 288-residue chain is Phosphatidylserine decarboxylase proenzyme (288 aa).

Catalysis depends on charge relay system; for autoendoproteolytic cleavage activity residues D95, H152, and S255. Catalysis depends on S255, which acts as the Schiff-base intermediate with substrate; via pyruvic acid; for decarboxylase activity. S255 is subject to Pyruvic acid (Ser); by autocatalysis.

This sequence belongs to the phosphatidylserine decarboxylase family. PSD-B subfamily. Prokaryotic type I sub-subfamily. In terms of assembly, heterodimer of a large membrane-associated beta subunit and a small pyruvoyl-containing alpha subunit. It depends on pyruvate as a cofactor. In terms of processing, is synthesized initially as an inactive proenzyme. Formation of the active enzyme involves a self-maturation process in which the active site pyruvoyl group is generated from an internal serine residue via an autocatalytic post-translational modification. Two non-identical subunits are generated from the proenzyme in this reaction, and the pyruvate is formed at the N-terminus of the alpha chain, which is derived from the carboxyl end of the proenzyme. The autoendoproteolytic cleavage occurs by a canonical serine protease mechanism, in which the side chain hydroxyl group of the serine supplies its oxygen atom to form the C-terminus of the beta chain, while the remainder of the serine residue undergoes an oxidative deamination to produce ammonia and the pyruvoyl prosthetic group on the alpha chain. During this reaction, the Ser that is part of the protease active site of the proenzyme becomes the pyruvoyl prosthetic group, which constitutes an essential element of the active site of the mature decarboxylase.

The protein resides in the cell membrane. The catalysed reaction is a 1,2-diacyl-sn-glycero-3-phospho-L-serine + H(+) = a 1,2-diacyl-sn-glycero-3-phosphoethanolamine + CO2. The protein operates within phospholipid metabolism; phosphatidylethanolamine biosynthesis; phosphatidylethanolamine from CDP-diacylglycerol: step 2/2. Its function is as follows. Catalyzes the formation of phosphatidylethanolamine (PtdEtn) from phosphatidylserine (PtdSer). The protein is Phosphatidylserine decarboxylase proenzyme of Methylococcus capsulatus (strain ATCC 33009 / NCIMB 11132 / Bath).